The following is a 501-amino-acid chain: Glutathione gamma-glutamylcysteinyltransferase 1 (501 aa).

In terms of domain architecture, Peptidase C83 spans 1 to 221; it reads MAMAGLYRRL…GFMLISRPHR (221 aa). Catalysis depends on residues C56, H162, and D180.

This sequence belongs to the phytochelatin synthase family. Expressed in roots, nodules and leaves.

The catalysed reaction is [Glu(-Cys)](n)-Gly + glutathione + H(+) = [Glu(-Cys)](n+1)-Gly + glycine. Requires cadmium for activity. Also activated in vitro by Zn(2+), Cu(2+), Fe(2+) or Fe(3+) ions, but not by Co(2+) or Ni(2+) ions. Its function is as follows. Involved in the synthesis of phytochelatins (PC) and homophytochelatins (hPC), the heavy-metal-binding peptides of plants. This chain is Glutathione gamma-glutamylcysteinyltransferase 1 (PCS1), found in Lotus japonicus (Lotus corniculatus var. japonicus).